Reading from the N-terminus, the 492-residue chain is N-succinylglutamate 5-semialdehyde dehydrogenase (492 aa).

An NAD(+)-binding site is contributed by 220–225 (GSASTG). Catalysis depends on residues glutamate 243 and cysteine 277.

This sequence belongs to the aldehyde dehydrogenase family. AstD subfamily.

It catalyses the reaction N-succinyl-L-glutamate 5-semialdehyde + NAD(+) + H2O = N-succinyl-L-glutamate + NADH + 2 H(+). It participates in amino-acid degradation; L-arginine degradation via AST pathway; L-glutamate and succinate from L-arginine: step 4/5. Its function is as follows. Catalyzes the NAD-dependent reduction of succinylglutamate semialdehyde into succinylglutamate. This chain is N-succinylglutamate 5-semialdehyde dehydrogenase, found in Salmonella agona (strain SL483).